The primary structure comprises 258 residues: L-rhamnose-1-dehydrogenase (258 aa).

Residues isoleucine 19, aspartate 68, and asparagine 95 each coordinate NADP(+). Residues serine 147 and tyrosine 161 each act as proton donor in the active site. Residues tyrosine 161, lysine 165, isoleucine 194, and threonine 196 each contribute to the NADP(+) site. Lysine 165 serves as the catalytic Lowers pKa of active site Tyr.

Belongs to the short-chain dehydrogenases/reductases (SDR) family.

The catalysed reaction is L-rhamnofuranose + NAD(+) = L-rhamnono-1,4-lactone + NADH + H(+). In terms of biological role, NAD-dependent dehydrogenase that has high activity with L-rhamnose and L-lyxose, and shows only low activity with L-mannose. Has no activity with NADP. Catalyzes the first step in an alternative pathway for rhamnose utilization that does not involve phosphorylated intermediates. In Scheffersomyces stipitis (strain ATCC 58785 / CBS 6054 / NBRC 10063 / NRRL Y-11545) (Yeast), this protein is L-rhamnose-1-dehydrogenase (DHG2).